Reading from the N-terminus, the 210-residue chain is DNA-directed RNA polymerases I, II, and III subunit RPABC1 (210 aa).

Met-1 bears the N-acetylmethionine mark. Lys-81 is covalently cross-linked (Glycyl lysine isopeptide (Lys-Gly) (interchain with G-Cter in SUMO2)).

This sequence belongs to the archaeal Rpo5/eukaryotic RPB5 RNA polymerase subunit family. In terms of assembly, component of the RNA polymerase I (Pol I), RNA polymerase II (Pol II) and RNA polymerase III (Pol III) complexes consisting of at least 13, 12 and 17 subunits, respectively. Pol I complex consists of a ten-subunit catalytic core composed of POLR1A/RPA1, POLR1B/RPA2, POLR1C/RPAC1, POLR1D/RPAC2, POLR1H/RPA12, POLR2E/RPABC1, POLR2F/RPABC2, POLR2H/RPABC3, POLR2K/RPABC4 and POLR2L/RPABC5; a mobile stalk subunit POLR1F/RPA43 protruding from the core and additional subunits homologous to general transcription factors POLR1E/RPA49 and POLR1G/RPA34. Part of Pol I pre-initiation complex (PIC), in which Pol I core assembles with RRN3 and promoter-bound UTBF and SL1/TIF-IB complex. Pol II complex contains a ten-subunit catalytic core composed of POLR2A/RPB1, POLR2B/RPB2, POLR2C/RPB3, POLR2I/RPB9, POLR2J/RPB11, POLR2E/RPABC1, POLR2F/RPABC2, POLR2H/RPABC3, POLR2K/RPABC4 and POLR2L/RPABC5 and a mobile stalk composed of two subunits POLR2D/RPB4 and POLR2G/RPB7. Part of Pol II(G) complex, in which Pol II core associates with an additional subunit POLR2M; unlike conventional Pol II, Pol II(G) functions as a transcriptional repressor. Part of TBP-based Pol II pre-initiation complex (PIC), in which Pol II core assembles with general transcription factors and other specific initiation factors including GTF2E1, GTF2E2, GTF2F1, GTF2F2, TCEA1, ERCC2, ERCC3, GTF2H2, GTF2H3, GTF2H4, GTF2H5, GTF2A1, GTF2A2, GTF2B and TBP; this large multi-subunit PIC complex mediates DNA unwinding and targets Pol II core to the transcription start site where the first phosphodiester bond forms. In Pol II complex, this subunit is present in 2-fold molar excess over the other subunits. Pol III complex consists of a ten-subunit catalytic core composed of POLR3A/RPC1, POLR3B/RPC2, POLR1C/RPAC1, POLR1D/RPAC2, POLR3K/RPC10, POLR2E/RPABC1, POLR2F/RPABC2, POLR2H/RPABC3, POLR2K/RPABC4 and POLR2L/RPABC5; a mobile stalk composed of two subunits POLR3H/RPC8 and CRCP/RPC9, protruding from the core and functioning primarily in transcription initiation; and additional subunits homologous to general transcription factors of the RNA polymerase II machinery, POLR3C/RPC3-POLR3F/RPC6-POLR3G/RPC7 heterotrimer required for transcription initiation and POLR3D/RPC4-POLR3E/RPC5 heterodimer involved in both transcription initiation and termination. Component of the PAQosome complex which is responsible for the biogenesis of several protein complexes and which consists of R2TP complex members RUVBL1, RUVBL2, RPAP3 and PIH1D1, URI complex members PFDN2, PFDN6, PDRG1, UXT and URI1 as well as ASDURF, POLR2E and DNAAF10/WDR92. Interacts with URI1.

The protein localises to the nucleus. It is found in the nucleolus. In terms of biological role, DNA-dependent RNA polymerase catalyzes the transcription of DNA into RNA using the four ribonucleoside triphosphates as substrates. Common component of RNA polymerases I, II and III which synthesize ribosomal RNA precursors, mRNA precursors and many functional non-coding RNAs, and small RNAs, such as 5S rRNA and tRNAs, respectively. Pol II is the central component of the basal RNA polymerase II transcription machinery. Pols are composed of mobile elements that move relative to each other. In Pol II, POLR2E/RPABC1 is part of the lower jaw surrounding the central large cleft and thought to grab the incoming DNA template. Seems to be the major component in this process. The chain is DNA-directed RNA polymerases I, II, and III subunit RPABC1 (POLR2E) from Pongo abelii (Sumatran orangutan).